The primary structure comprises 1116 residues: Angiopoietin-1 receptor (1116 aa).

Positions 1 to 21 are cleaved as a signal peptide; that stretch reads MCLLDSCTALLLLGCWMSGSA. At 22–745 the chain is on the extracellular side; that stretch reads VRISDVTLVN…FAAHGHLLLY (724 aa). Cys46 and Cys106 are oxidised to a cystine. The region spanning 46–126 is the Ig-like C2-type 1 domain; it reads CVSSDWSSGG…YTYKMLQEAA (81 aa). Residues Asn110, Asn143, and Asn223 are each glycosylated (N-linked (GlcNAc...) asparagine). 3 EGF-like domains span residues 214 to 256, 258 to 302, and 304 to 342; these read SCRA…HTCD, VCGE…LSCN, and ACPD…SRCE. 12 disulfides stabilise this stretch: Cys215–Cys224, Cys228–Cys237, Cys231–Cys244, Cys246–Cys255, Cys259–Cys268, Cys272–Cys277, Cys283–Cys290, Cys292–Cys301, Cys305–Cys314, Cys318–Cys325, Cys320–Cys331, and Cys333–Cys341. An Ig-like C2-type 2 domain is found at 348-438; sequence PVISHLRDVE…MQVEDEFTVE (91 aa). N-linked (GlcNAc...) asparagine glycosylation is found at Asn367, Asn387, and Asn425. An intrachain disulfide couples Cys368 to Cys422. Fibronectin type-III domains lie at 444-538, 540-633, and 634-729; these read RPQN…TQVL, LPVG…QLPP, and PPAN…TLPQ. N-linked (GlcNAc...) asparagine glycans are attached at residues Asn590, Asn637, and Asn642. A helical membrane pass occupies residues 746–766; the sequence is AILGSAGMTCCTVLLAFCIVL. Residues 767–1116 are Cytoplasmic-facing; it reads QLKRNTLQRR…GIDCSAEEAG (350 aa). The region spanning 816 to 1095 is the Protein kinase domain; the sequence is IQFQDVLGEG…RMLEERKTYV (280 aa). Residues 822-830 and Lys847 contribute to the ATP site; that span reads LGEGNFGQV. The residue at position 852 (Tyr852) is a Phosphotyrosine; by autocatalysis. Asp956 (proton acceptor) is an active-site residue. 3 positions are modified to phosphotyrosine; by autocatalysis: Tyr984, Tyr1094, and Tyr1100.

The protein belongs to the protein kinase superfamily. Tyr protein kinase family. Tie subfamily. Interacts with svep1. Autophosphorylated on tyrosine residues in response to ligand binding. Autophosphorylation occurs in trans, i.e. one subunit of the dimeric receptor phosphorylates tyrosine residues on the other subunit. Autophosphorylation occurs in a sequential manner, where Tyr-984 in the kinase activation loop is phosphorylated first, followed by autophosphorylation at additional tyrosine residues. Phosphorylation is important for interaction with scaffold proteins and effectors.

Its subcellular location is the cell membrane. It is found in the cell junction. The protein resides in the focal adhesion. It localises to the cytoplasm. The protein localises to the cytoskeleton. The catalysed reaction is L-tyrosyl-[protein] + ATP = O-phospho-L-tyrosyl-[protein] + ADP + H(+). Its activity is regulated as follows. Angiopoietin binding leads to receptor dimerization and activation by autophosphorylation at Tyr-984 on the kinase activation loop. Its function is as follows. Tyrosine-protein kinase that acts as a cell-surface receptor for angiopoietins and regulates angiogenesis, endothelial cell survival, proliferation, migration, adhesion and cell spreading, reorganization of the actin cytoskeleton, but also maintenance of vascular quiescence. Can activate or inhibit angiogenesis, depending on the context. Angiopoietin signaling triggers receptor dimerization and autophosphorylation at specific tyrosine residues that then serve as binding sites for scaffold proteins and effectors. This chain is Angiopoietin-1 receptor, found in Danio rerio (Zebrafish).